Reading from the N-terminus, the 378-residue chain is 3-dehydroquinate synthase (378 aa).

NAD(+) contacts are provided by residues Gly115 to Asp119, Thr139 to Ser140, Lys152, and Lys161. Residues Glu194, His256, and His275 each contribute to the Zn(2+) site.

This sequence belongs to the sugar phosphate cyclases superfamily. Dehydroquinate synthase family. It depends on Co(2+) as a cofactor. Zn(2+) serves as cofactor. NAD(+) is required as a cofactor.

It is found in the cytoplasm. It carries out the reaction 7-phospho-2-dehydro-3-deoxy-D-arabino-heptonate = 3-dehydroquinate + phosphate. It participates in metabolic intermediate biosynthesis; chorismate biosynthesis; chorismate from D-erythrose 4-phosphate and phosphoenolpyruvate: step 2/7. In terms of biological role, catalyzes the conversion of 3-deoxy-D-arabino-heptulosonate 7-phosphate (DAHP) to dehydroquinate (DHQ). This is 3-dehydroquinate synthase from Brucella anthropi (strain ATCC 49188 / DSM 6882 / CCUG 24695 / JCM 21032 / LMG 3331 / NBRC 15819 / NCTC 12168 / Alc 37) (Ochrobactrum anthropi).